A 552-amino-acid polypeptide reads, in one-letter code: T-box transcription factor TBX4 (552 aa).

Over residues 1–14 (MLQDKGLSESEEAF) the composition is skewed to basic and acidic residues. The tract at residues 1–50 (MLQDKGLSESEEAFRAPGPALGEASNTSTTNAPEPALATPGLSGAALSSP) is disordered. Positions 76–256 (LHEKELWKKF…NNPFAKGFRG (181 aa)) form a DNA-binding region, T-box. S514 is modified (phosphoserine).

The protein resides in the nucleus. Transcriptional regulator that has an essential role in the organogenesis of lungs, pelvis, and hindlimbs. In Mus musculus (Mouse), this protein is T-box transcription factor TBX4 (Tbx4).